The following is an 872-amino-acid chain: Coatomer subunit gamma-2 (872 aa).

6 HEAT repeats span residues 64 to 101 (MEAT…ISED), 283 to 320 (RELA…KHPS), 321 to 355 (AVTA…GSES), 356 to 392 (SVDR…KYPR), 395 to 430 (SVMM…ENPD), and 467 to 504 (PTPS…QNEP).

Belongs to the COPG family. As to quaternary structure, oligomeric complex.

It is found in the cytoplasm. It localises to the golgi apparatus membrane. Its subcellular location is the cytoplasmic vesicle. The protein resides in the COPI-coated vesicle membrane. In terms of biological role, the coatomer is a cytosolic protein complex that binds to dilysine motifs and reversibly associates with Golgi non-clathrin-coated vesicles, which further mediate biosynthetic protein transport from the ER, via the Golgi up to the trans Golgi network. Coatomer complex is required for budding from Golgi membranes, and is essential for the retrograde Golgi-to-ER transport of dilysine-tagged proteins. This Xenopus tropicalis (Western clawed frog) protein is Coatomer subunit gamma-2 (copg2).